The chain runs to 1188 residues: DNA-directed RNA polymerase subunit beta (1188 aa).

It belongs to the RNA polymerase beta chain family. As to quaternary structure, the RNAP catalytic core consists of 2 alpha, 1 beta, 1 beta' and 1 omega subunit. When a sigma factor is associated with the core the holoenzyme is formed, which can initiate transcription.

The enzyme catalyses RNA(n) + a ribonucleoside 5'-triphosphate = RNA(n+1) + diphosphate. DNA-dependent RNA polymerase catalyzes the transcription of DNA into RNA using the four ribonucleoside triphosphates as substrates. The protein is DNA-directed RNA polymerase subunit beta of Streptococcus pyogenes serotype M3 (strain ATCC BAA-595 / MGAS315).